A 120-amino-acid polypeptide reads, in one-letter code: MESQAKVKISDKAEGIIERDVQNAVIGRREILLKVYHMGSGTPSRKDIIKAISQAFASQENLVVVRKISTSYGAGISNVKLHIYKSREILEKIEPKYLLDRDAGTKQKKGGSKGGQGAKG.

The interval 101–120 (RDAGTKQKKGGSKGGQGAKG) is disordered.

This sequence belongs to the eukaryotic ribosomal protein eS24 family.

This is Small ribosomal subunit protein eS24 from Saccharolobus islandicus (strain M.16.4 / Kamchatka #3) (Sulfolobus islandicus).